The primary structure comprises 410 residues: Lissencephaly-1 homolog A (410 aa).

Residues 7-39 enclose the LisH domain; it reads QRDELNRAIADYLRSNGYEEAYSVFKKEAELDM. Positions 56-83 form a coiled coil; the sequence is TSVIRLQKKVMELESKLNEAKEEINIGG. WD repeat units lie at residues 106–145, 148–187, 190–229, 232–271, 274–333, 336–375, and 378–410; these read GHRS…FERT, GHTD…CIRT, GHDH…CVKT, GHRE…CKAE, EHEH…CLMT, GHDN…CTKT, and AHEH…WECR.

This sequence belongs to the WD repeat LIS1/nudF family. Can self-associate. Component of the cytosolic PAF-AH (I) heterotetrameric enzyme, which is composed of PAFAH1B1 (beta), PAFAH1B2 (alpha2) and PAFAH1B3 (alpha1) subunits. The catalytic activity of the enzyme resides in the alpha1 (PAFAH1B3) and alpha2 (PAFAH1B2) subunits, whereas the beta subunit (PAFAH1B1) has regulatory activity. Trimer formation is not essential for the catalytic activity. Interacts with dynein, dynactin, nde1 and ndel1.

The protein localises to the cytoplasm. Its subcellular location is the cytoskeleton. The protein resides in the microtubule organizing center. It localises to the centrosome. Functionally, regulatory subunit (beta subunit) of the cytosolic type I platelet-activating factor (PAF) acetylhydrolase (PAF-AH (I)), an enzyme that catalyzes the hydrolyze of the acetyl group at the sn-2 position of PAF and its analogs and participates in PAF inactivation. Regulates the PAF-AH (I) activity in a catalytic dimer composition-dependent manner. Positively regulates the activity of the minus-end directed microtubule motor protein dynein. May enhance dynein-mediated microtubule sliding by targeting dynein to the microtubule plus end. Required for several dynein- and microtubule-dependent processes such as the maintenance of Golgi integrity, the peripheral transport of microtubule fragments and the coupling of the nucleus and centrosome. May be required for proliferation of neuronal precursors and neuronal migration. The chain is Lissencephaly-1 homolog A (pafah1b1a) from Danio rerio (Zebrafish).